A 491-amino-acid polypeptide reads, in one-letter code: uncharacterized protein (491 aa).

Trp99 is a binding site for substrate. Asn137 lines the Ca(2+) pocket. His138 is a binding site for substrate. Ca(2+) contacts are provided by Glu177 and Asp190. Arg219 contacts substrate. 3 residues coordinate Ca(2+): Asp221, His225, and Glu245. The Nucleophile role is filled by Asp221. 224–225 contributes to the substrate binding site; the sequence is KH. Glu245 acts as the Proton donor in catalysis. Residues Gly249, His312, and Arg360 each coordinate substrate.

Belongs to the glycosyl hydrolase 13 family. Requires Ca(2+) as cofactor.

Its subcellular location is the cytoplasm. The protein localises to the nucleus. This is an uncharacterized protein from Schizosaccharomyces pombe (strain 972 / ATCC 24843) (Fission yeast).